The primary structure comprises 505 residues: Lysine--tRNA ligase (505 aa).

The Mg(2+) site is built by Glu-415 and Glu-422.

This sequence belongs to the class-II aminoacyl-tRNA synthetase family. As to quaternary structure, homodimer. Requires Mg(2+) as cofactor.

The protein resides in the cytoplasm. The catalysed reaction is tRNA(Lys) + L-lysine + ATP = L-lysyl-tRNA(Lys) + AMP + diphosphate. The chain is Lysine--tRNA ligase from Edwardsiella ictaluri (strain 93-146).